The sequence spans 282 residues: Protease HtpX homolog (282 aa).

2 consecutive transmembrane segments (helical) span residues 6–26 and 29–49; these read TLVL…LIGG and GATF…FFSH. Position 130 (H130) interacts with Zn(2+). Residue E131 is part of the active site. H134 lines the Zn(2+) pocket. 2 helical membrane-spanning segments follow: residues 140 to 160 and 180 to 200; these read ILIS…AQMA and IVAL…QLAI. Zn(2+) is bound at residue E205.

This sequence belongs to the peptidase M48B family. Zn(2+) serves as cofactor.

It is found in the cell inner membrane. The chain is Protease HtpX homolog from Thermodesulfovibrio yellowstonii (strain ATCC 51303 / DSM 11347 / YP87).